The chain runs to 62 residues: Photosystem II reaction center protein Z (62 aa).

The next 2 membrane-spanning stretches (helical) occupy residues 8-28 (TLFA…VVFA) and 41-61 (LSGL…NSFV).

Belongs to the PsbZ family. In terms of assembly, PSII is composed of 1 copy each of membrane proteins PsbA, PsbB, PsbC, PsbD, PsbE, PsbF, PsbH, PsbI, PsbJ, PsbK, PsbL, PsbM, PsbT, PsbY, PsbZ, Psb30/Ycf12, at least 3 peripheral proteins of the oxygen-evolving complex and a large number of cofactors. It forms dimeric complexes.

It localises to the plastid. The protein resides in the chloroplast thylakoid membrane. Its function is as follows. May control the interaction of photosystem II (PSII) cores with the light-harvesting antenna, regulates electron flow through the 2 photosystem reaction centers. PSII is a light-driven water plastoquinone oxidoreductase, using light energy to abstract electrons from H(2)O, generating a proton gradient subsequently used for ATP formation. This Stigeoclonium helveticum (Green alga) protein is Photosystem II reaction center protein Z.